Consider the following 75-residue polypeptide: Vacuolar ATPase assembly integral membrane protein VMA21 (75 aa).

The Cytoplasmic portion of the chain corresponds to 1–8; the sequence is MPVDVAPG. The chain crosses the membrane as a helical span at residues 9–29; that stretch reads VIKKLMFFTAAMVICPLLTFF. The Lumenal portion of the chain corresponds to 30–41; sequence SIKQFTTNTIVS. The chain crosses the membrane as a helical span at residues 42-62; it reads GGLAALAANLVLIGYIVVAFM. Topologically, residues 63–75 are cytoplasmic; sequence EDTTDVKAESKKD.

The protein belongs to the VMA21 family.

Its subcellular location is the endoplasmic reticulum membrane. The protein localises to the endoplasmic reticulum-Golgi intermediate compartment membrane. It localises to the cytoplasmic vesicle. The protein resides in the COPII-coated vesicle membrane. In terms of biological role, required for the assembly of the V0 complex of the vacuolar ATPase (V-ATPase) in the endoplasmic reticulum. The polypeptide is Vacuolar ATPase assembly integral membrane protein VMA21 (Vanderwaltozyma polyspora (strain ATCC 22028 / DSM 70294 / BCRC 21397 / CBS 2163 / NBRC 10782 / NRRL Y-8283 / UCD 57-17) (Kluyveromyces polysporus)).